The chain runs to 188 residues: Protein GrpE 2 (188 aa).

This sequence belongs to the GrpE family. As to quaternary structure, homodimer.

It localises to the cytoplasm. Its function is as follows. Participates actively in the response to hyperosmotic and heat shock by preventing the aggregation of stress-denatured proteins, in association with DnaK and GrpE. It is the nucleotide exchange factor for DnaK and may function as a thermosensor. Unfolded proteins bind initially to DnaJ; upon interaction with the DnaJ-bound protein, DnaK hydrolyzes its bound ATP, resulting in the formation of a stable complex. GrpE releases ADP from DnaK; ATP binding to DnaK triggers the release of the substrate protein, thus completing the reaction cycle. Several rounds of ATP-dependent interactions between DnaJ, DnaK and GrpE are required for fully efficient folding. This chain is Protein GrpE 2, found in Buchnera aphidicola subsp. Acyrthosiphon pisum (strain APS) (Acyrthosiphon pisum symbiotic bacterium).